The sequence spans 451 residues: AP-3 complex subunit mu (451 aa).

The region spanning 191-450 (NNEIYVDLVE…TSRAGDYIVR (260 aa)) is the MHD domain.

This sequence belongs to the adaptor complexes medium subunit family. Adaptor protein complex 3 (AP-3) is a heterotetramer composed of 2 large adaptins (APL5 and APL6), a medium adaptin (APM3) and a small adaptin (APS3).

It is found in the golgi apparatus. The protein resides in the cytoplasmic vesicle membrane. Part of the AP-3 complex, an adaptor-related complex which is not clathrin-associated. The complex is associated with the Golgi region as well as more peripheral structures. It facilitates the budding of vesicles from the Golgi membrane and may be directly involved in trafficking to the vacuole. The protein is AP-3 complex subunit mu (APM3) of Eremothecium gossypii (strain ATCC 10895 / CBS 109.51 / FGSC 9923 / NRRL Y-1056) (Yeast).